The following is a 351-amino-acid chain: Secreted frizzled-related sequence protein 4 (351 aa).

The signal sequence occupies residues 1 to 18 (MLRSILVALCLWLRLALG). Residues 19–139 (VRGAPCEAVR…VYDRGVCISP (121 aa)) enclose the FZ domain. 5 disulfide bridges follow: Cys-24–Cys-85, Cys-32–Cys-78, Cys-69–Cys-108, Cys-97–Cys-136, and Cys-101–Cys-125. 2 N-linked (GlcNAc...) asparagine glycosylation sites follow: Asn-38 and Asn-68. N-linked (GlcNAc...) asparagine glycosylation is found at Asn-116, Asn-194, and Asn-240. The region spanning 178-306 (CKCKKVKPTL…TIQDKKQIAS (129 aa)) is the NTR domain. Residues 293 to 303 (EQQRTIQDKKQ) show a composition bias toward basic and acidic residues. Residues 293 to 351 (EQQRTIQDKKQIASRTSRTSRSNPPKSKGRPPAPKPASPKKNIKARSAPKKSNLKKSAS) form a disordered region. A compositionally biased stretch (low complexity) spans 306 to 318 (SRTSRTSRSNPPK). The span at 333-351 (KNIKARSAPKKSNLKKSAS) shows a compositional bias: basic residues.

Belongs to the secreted frizzled-related protein (sFRP) family. In terms of tissue distribution, expressed in the ovary. Localized to granulosa cells of periovulatory follicles and corpora lutea. Weakly expressed in adult tissues including kidney, brain and lung.

Its subcellular location is the secreted. Soluble frizzled-related proteins (sFRPS) function as modulators of Wnt signaling through direct interaction with Wnts. They have a role in regulating cell growth and differentiation in specific cell types. SFRP4 plays a role in bone morphogenesis. May also act as a regulator of adult uterine morphology and function. May also increase apoptosis during ovulation possibly through modulation of FZ1/FZ4/WNT4 signaling. Has phosphaturic effects by specifically inhibiting sodium-dependent phosphate uptake. This chain is Secreted frizzled-related sequence protein 4 (Sfrp4), found in Mus musculus (Mouse).